Here is an 86-residue protein sequence, read N- to C-terminus: ATP synthase subunit c (86 aa).

Transmembrane regions (helical) follow at residues Val-8–Ile-28 and Gly-66–Leu-86.

This sequence belongs to the ATPase C chain family. As to quaternary structure, F-type ATPases have 2 components, F(1) - the catalytic core - and F(0) - the membrane proton channel. F(1) has five subunits: alpha(3), beta(3), gamma(1), delta(1), epsilon(1). F(0) has three main subunits: a(1), b(2) and c(10-14). The alpha and beta chains form an alternating ring which encloses part of the gamma chain. F(1) is attached to F(0) by a central stalk formed by the gamma and epsilon chains, while a peripheral stalk is formed by the delta and b chains.

The protein localises to the cell membrane. Functionally, f(1)F(0) ATP synthase produces ATP from ADP in the presence of a proton or sodium gradient. F-type ATPases consist of two structural domains, F(1) containing the extramembraneous catalytic core and F(0) containing the membrane proton channel, linked together by a central stalk and a peripheral stalk. During catalysis, ATP synthesis in the catalytic domain of F(1) is coupled via a rotary mechanism of the central stalk subunits to proton translocation. In terms of biological role, key component of the F(0) channel; it plays a direct role in translocation across the membrane. A homomeric c-ring of between 10-14 subunits forms the central stalk rotor element with the F(1) delta and epsilon subunits. This Natranaerobius thermophilus (strain ATCC BAA-1301 / DSM 18059 / JW/NM-WN-LF) protein is ATP synthase subunit c.